The primary structure comprises 338 residues: Lipoate-protein ligase A (338 aa).

In terms of domain architecture, BPL/LPL catalytic spans 29–216; sequence PATQRVLFLW…AFFAHYGERV (188 aa). Residues Arg-71, 76–79, and Lys-134 each bind ATP; that span reads GAVF. Lys-134 is a binding site for (R)-lipoate.

It belongs to the LplA family. In terms of assembly, monomer.

Its subcellular location is the cytoplasm. The catalysed reaction is L-lysyl-[lipoyl-carrier protein] + (R)-lipoate + ATP = N(6)-[(R)-lipoyl]-L-lysyl-[lipoyl-carrier protein] + AMP + diphosphate + H(+). The protein operates within protein modification; protein lipoylation via exogenous pathway; protein N(6)-(lipoyl)lysine from lipoate: step 1/2. It participates in protein modification; protein lipoylation via exogenous pathway; protein N(6)-(lipoyl)lysine from lipoate: step 2/2. Functionally, catalyzes both the ATP-dependent activation of exogenously supplied lipoate to lipoyl-AMP and the transfer of the activated lipoyl onto the lipoyl domains of lipoate-dependent enzymes. In Escherichia coli O81 (strain ED1a), this protein is Lipoate-protein ligase A.